We begin with the raw amino-acid sequence, 249 residues long: MKLNISFPATGCQKLIEVDDERKLRTFYEKRMATEVAADALGEEWKGYVVRISGGNDKQGFPMKQGVLTHGRVRLLLSKGHSCYRPRRTGERKRKSVRGCIVDANLSVLNLVIVKKGEKDIPGLTDTTVPRRLGPKRASRIRKLFNLSKEDDVRQYVVRKPLNKDGKKPRTKAPKIQRLVTPRVLQHKRRRIALKKQRTKKNKEEAAEYAKLLAKRMKEAKEKRQEQIAKRRRLSSLRASTSKSESSQK.

Lys-14 is covalently cross-linked (Glycyl lysine isopeptide (Lys-Gly) (interchain with G-Cter in SUMO2)). ADP-ribosyl glutamic acid is present on Glu-35. (3R)-3-hydroxyarginine is present on Arg-137. Residue Ser-148 is modified to Phosphoserine. Lys-211 carries the N6-acetyllysine modification. The span at 217-229 shows a compositional bias: basic and acidic residues; the sequence is MKEAKEKRQEQIA. The tract at residues 217 to 249 is disordered; it reads MKEAKEKRQEQIAKRRRLSSLRASTSKSESSQK. Phosphoserine; by RPS6KA1, RPS6KA3, DAPK1 and PASK occurs at positions 235 and 236. The segment covering 236-249 has biased composition (low complexity); that stretch reads SLRASTSKSESSQK. 4 positions are modified to phosphoserine: Ser-240, Ser-242, Ser-244, and Ser-247.

It belongs to the eukaryotic ribosomal protein eS6 family. In terms of assembly, component of the small ribosomal subunit. Part of the small subunit (SSU) processome, composed of more than 70 proteins and the RNA chaperone small nucleolar RNA (snoRNA) U3. In terms of processing, ribosomal protein S6 is the major substrate of protein kinases in eukaryote ribosomes. The phosphorylation is stimulated by growth factors, tumor promoting agents, and mitogens. It is dephosphorylated at growth arrest. Phosphorylated at Ser-235 and Ser-236 by RPS6KA1 and RPS6KA3; phosphorylation at these sites facilitates the assembly of the pre-initiation complex. Post-translationally, specifically hydroxylated (with R stereochemistry) at C-3 of Arg-137 by KDM8. Mono-ADP-ribosylation at Glu-35 by PARP16 inhibits polysome assembly and mRNA loading, thereby inhibiting protein translation.

The protein resides in the cytoplasm. It is found in the nucleus. The protein localises to the nucleolus. Component of the 40S small ribosomal subunit. Plays an important role in controlling cell growth and proliferation through the selective translation of particular classes of mRNA. Part of the small subunit (SSU) processome, first precursor of the small eukaryotic ribosomal subunit. During the assembly of the SSU processome in the nucleolus, many ribosome biogenesis factors, an RNA chaperone and ribosomal proteins associate with the nascent pre-rRNA and work in concert to generate RNA folding, modifications, rearrangements and cleavage as well as targeted degradation of pre-ribosomal RNA by the RNA exosome. This chain is Small ribosomal subunit protein eS6 (RPS6), found in Bos taurus (Bovine).